Reading from the N-terminus, the 616-residue chain is MALLQIAEPGLMAAPHQHKLAVGIDLGTTNSLVATVRSAHTEILLDEKDRPLVPSIVHFGDNNEITVGYEAGELASIDPQNTVISVKRLIGRSLEDVQARYPNLPYRFEASENGLPLISTRKSAVSPVEVSSEILKKLTALAKRRLGGELQGAVITVPAYFDDAQRQSTKDAAKLAGLNVLRLLNEPTAAAIAYGLDSGKEGVIAVYDLGGGTFDISILRLSKGVFEVLATGGDTALGGDDFDHLVADWITEQSGISPQDDKQKRQLVELATRLKIQLTDNETVAIQYQNWHGKISRNQFNQLIQPLVKRSLISCRRALKDANVTADEVNEVVMVGGSTRVPFVREQVGEFFKRQPLTSIDPDKVVALGAAVQADILVGNKPDSEMLLLDVIPLSLGIETMGGLVEKIIPRNTTIPVARAQEFTTFKDGQTAMTVHIVQGEREMVADCRSLARFTLRGIPPMAAGAAQVRVTYQVDADGLLNVTAMEKSTGVQSSIQVKPSYGLTDDEITQMLKASMDNAKQDIDARLLAEQRVEAKRVIESVLSALSHDRDLLNDEELSAIKKALVELDKLQQQNDTLAIKQGIKDLDAATQEFAARRMDKSIRSALTGHSVEDI.

This sequence belongs to the heat shock protein 70 family.

In terms of biological role, chaperone involved in the maturation of iron-sulfur cluster-containing proteins. Has a low intrinsic ATPase activity which is markedly stimulated by HscB. This is Chaperone protein HscA homolog from Mannheimia succiniciproducens (strain KCTC 0769BP / MBEL55E).